We begin with the raw amino-acid sequence, 269 residues long: 3-methyl-2-oxobutanoate hydroxymethyltransferase (269 aa).

The Mg(2+) site is built by aspartate 48 and aspartate 87. 3-methyl-2-oxobutanoate-binding positions include aspartate 48–serine 49, aspartate 87, and lysine 117. Position 119 (glutamate 119) interacts with Mg(2+). Glutamate 186 acts as the Proton acceptor in catalysis.

Belongs to the PanB family. Homodecamer; pentamer of dimers. Mg(2+) serves as cofactor.

The protein localises to the cytoplasm. It catalyses the reaction 3-methyl-2-oxobutanoate + (6R)-5,10-methylene-5,6,7,8-tetrahydrofolate + H2O = 2-dehydropantoate + (6S)-5,6,7,8-tetrahydrofolate. It participates in cofactor biosynthesis; (R)-pantothenate biosynthesis; (R)-pantoate from 3-methyl-2-oxobutanoate: step 1/2. Its function is as follows. Catalyzes the reversible reaction in which hydroxymethyl group from 5,10-methylenetetrahydrofolate is transferred onto alpha-ketoisovalerate to form ketopantoate. This Moorella thermoacetica (strain ATCC 39073 / JCM 9320) protein is 3-methyl-2-oxobutanoate hydroxymethyltransferase.